A 184-amino-acid polypeptide reads, in one-letter code: Adenine phosphoribosyltransferase (184 aa).

The protein belongs to the purine/pyrimidine phosphoribosyltransferase family. As to quaternary structure, homodimer.

The protein localises to the cytoplasm. The enzyme catalyses AMP + diphosphate = 5-phospho-alpha-D-ribose 1-diphosphate + adenine. It participates in purine metabolism; AMP biosynthesis via salvage pathway; AMP from adenine: step 1/1. Its function is as follows. Catalyzes a salvage reaction resulting in the formation of AMP, that is energically less costly than de novo synthesis. This chain is Adenine phosphoribosyltransferase, found in Paracidovorax citrulli (strain AAC00-1) (Acidovorax citrulli).